Consider the following 499-residue polypeptide: uncharacterized protein (499 aa).

This is an uncharacterized protein from Metamycoplasma hominis (strain ATCC 23114 / DSM 25592 / NBRC 14850 / NCTC 10111 / PG21) (Mycoplasma hominis).